Here is a 287-residue protein sequence, read N- to C-terminus: Nucleotide-binding protein VV0445 (287 aa).

8–15 (GHSGAGKS) contributes to the ATP binding site. 56 to 59 (DVRN) serves as a coordination point for GTP.

It belongs to the RapZ-like family.

Displays ATPase and GTPase activities. In Vibrio vulnificus (strain YJ016), this protein is Nucleotide-binding protein VV0445.